The sequence spans 439 residues: 23S rRNA (uracil(1939)-C(5))-methyltransferase RlmD (439 aa).

The region spanning 10-69 (KTQLNTRHQAVQVERLDHHGAGIAYLKKKPLFIDGALPGEEVVTQLVEEKSKFARGKLIK) is the TRAM domain. Residues cysteine 82, cysteine 88, cysteine 91, and cysteine 169 each coordinate [4Fe-4S] cluster. Residues glutamine 272, phenylalanine 301, asparagine 306, glutamate 322, asparagine 349, and aspartate 370 each coordinate S-adenosyl-L-methionine. The Nucleophile role is filled by cysteine 396.

This sequence belongs to the class I-like SAM-binding methyltransferase superfamily. RNA M5U methyltransferase family. RlmD subfamily.

The catalysed reaction is uridine(1939) in 23S rRNA + S-adenosyl-L-methionine = 5-methyluridine(1939) in 23S rRNA + S-adenosyl-L-homocysteine + H(+). Catalyzes the formation of 5-methyl-uridine at position 1939 (m5U1939) in 23S rRNA. The sequence is that of 23S rRNA (uracil(1939)-C(5))-methyltransferase RlmD from Vibrio parahaemolyticus serotype O3:K6 (strain RIMD 2210633).